A 299-amino-acid chain; its full sequence is Probable lipid kinase YegS (299 aa).

The DAGKc domain maps to 2 to 133 (ANFPASLLIL…IDMARVNDKT (132 aa)). Residues Thr40, 66–72 (GDGTINE), and Thr95 each bind ATP. The Mg(2+) site is built by Leu215, Asp218, and Leu220. Glu271 serves as the catalytic Proton acceptor.

Belongs to the diacylglycerol/lipid kinase family. YegS lipid kinase subfamily. The cofactor is Mg(2+). Ca(2+) serves as cofactor.

The protein localises to the cytoplasm. In terms of biological role, probably phosphorylates lipids; the in vivo substrate is unknown. This Salmonella heidelberg (strain SL476) protein is Probable lipid kinase YegS.